A 781-amino-acid polypeptide reads, in one-letter code: Molybdenum cofactor sulfurase (781 aa).

N6-(pyridoxal phosphate)lysine is present on Lys-246. Cys-413 is a catalytic residue. The MOSC domain occupies 619-781 (GDAVAQWLSE…MTCGDVVIVE (163 aa)). At Ser-734 the chain carries Phosphoserine.

The protein belongs to the class-V pyridoxal-phosphate-dependent aminotransferase family. MOCOS subfamily. Pyridoxal 5'-phosphate is required as a cofactor.

The enzyme catalyses Mo-molybdopterin + L-cysteine + AH2 = thio-Mo-molybdopterin + L-alanine + A + H2O. The protein operates within cofactor biosynthesis; molybdopterin biosynthesis. Functionally, sulfurates the molybdenum cofactor. Sulfation of molybdenum is essential for xanthine dehydrogenase (XDH) and aldehyde oxidase (ADO) enzymes in which molybdenum cofactor is liganded by 1 oxygen and 1 sulfur atom in active form. This is Molybdenum cofactor sulfurase from Drosophila erecta (Fruit fly).